A 480-amino-acid polypeptide reads, in one-letter code: Glutamyl-tRNA(Gln) amidotransferase subunit A (480 aa).

Active-site charge relay system residues include Lys-74 and Ser-149. The Acyl-ester intermediate role is filled by Ser-173.

This sequence belongs to the amidase family. GatA subfamily. As to quaternary structure, heterotrimer of A, B and C subunits.

It carries out the reaction L-glutamyl-tRNA(Gln) + L-glutamine + ATP + H2O = L-glutaminyl-tRNA(Gln) + L-glutamate + ADP + phosphate + H(+). Functionally, allows the formation of correctly charged Gln-tRNA(Gln) through the transamidation of misacylated Glu-tRNA(Gln) in organisms which lack glutaminyl-tRNA synthetase. The reaction takes place in the presence of glutamine and ATP through an activated gamma-phospho-Glu-tRNA(Gln). The sequence is that of Glutamyl-tRNA(Gln) amidotransferase subunit A from Vesicomyosocius okutanii subsp. Calyptogena okutanii (strain HA).